The sequence spans 289 residues: Probable protein phosphatase 2C 39 (289 aa).

Positions 41–288 (THGFHLVKGK…DDISVVVVKF (248 aa)) constitute a PPM-type phosphatase domain. Mn(2+) is bound by residues Asp-78, Gly-79, Asp-240, and Asp-279.

The protein belongs to the PP2C family. It depends on Mg(2+) as a cofactor. The cofactor is Mn(2+).

The catalysed reaction is O-phospho-L-seryl-[protein] + H2O = L-seryl-[protein] + phosphate. It catalyses the reaction O-phospho-L-threonyl-[protein] + H2O = L-threonyl-[protein] + phosphate. In Arabidopsis thaliana (Mouse-ear cress), this protein is Probable protein phosphatase 2C 39.